The sequence spans 273 residues: 4-hydroxy-tetrahydrodipicolinate reductase 1 (273 aa).

Residues 13–18 (GAAGRM) and glutamate 39 each bind NAD(+). Residue arginine 40 participates in NADP(+) binding. Residues 103 to 105 (GTT) and 127 to 130 (SGNM) contribute to the NAD(+) site. Catalysis depends on histidine 161, which acts as the Proton donor/acceptor. Histidine 162 is a binding site for (S)-2,3,4,5-tetrahydrodipicolinate. Lysine 165 acts as the Proton donor in catalysis. A (S)-2,3,4,5-tetrahydrodipicolinate-binding site is contributed by 171–172 (GT).

This sequence belongs to the DapB family.

It is found in the cytoplasm. It carries out the reaction (S)-2,3,4,5-tetrahydrodipicolinate + NAD(+) + H2O = (2S,4S)-4-hydroxy-2,3,4,5-tetrahydrodipicolinate + NADH + H(+). It catalyses the reaction (S)-2,3,4,5-tetrahydrodipicolinate + NADP(+) + H2O = (2S,4S)-4-hydroxy-2,3,4,5-tetrahydrodipicolinate + NADPH + H(+). It participates in amino-acid biosynthesis; L-lysine biosynthesis via DAP pathway; (S)-tetrahydrodipicolinate from L-aspartate: step 4/4. In terms of biological role, catalyzes the conversion of 4-hydroxy-tetrahydrodipicolinate (HTPA) to tetrahydrodipicolinate. The polypeptide is 4-hydroxy-tetrahydrodipicolinate reductase 1 (Mesorhizobium japonicum (strain LMG 29417 / CECT 9101 / MAFF 303099) (Mesorhizobium loti (strain MAFF 303099))).